The chain runs to 178 residues: Dual-action ribosomal maturation protein DarP (178 aa).

This sequence belongs to the DarP family.

It localises to the cytoplasm. Member of a network of 50S ribosomal subunit biogenesis factors which assembles along the 30S-50S interface, preventing incorrect 23S rRNA structures from forming. Promotes peptidyl transferase center (PTC) maturation. The sequence is that of Dual-action ribosomal maturation protein DarP from Mannheimia succiniciproducens (strain KCTC 0769BP / MBEL55E).